Reading from the N-terminus, the 94-residue chain is Sapecin (94 aa).

The first 23 residues, 1–23, serve as a signal peptide directing secretion; sequence MKSFIVLAVTLCLAAFFMGQSVA. The propeptide occupies 24 to 54; it reads SPAAAAEESKFVDGLHALKTIEPELHGRYKR. 3 cysteine pairs are disulfide-bonded: C57/C84, C70/C90, and C74/C92.

It belongs to the invertebrate defensin family. Type 1 subfamily. As to expression, hemocytes and fat body.

It localises to the secreted. Functionally, sapecins, which are potent bactericidal proteins, are produced in response to injury. Sapecin is cytotoxic to Gram-positive bacteria, and to a lesser extent against Gram-negative bacteria. The protein is Sapecin of Sarcophaga peregrina (Flesh fly).